The chain runs to 122 residues: Prefoldin subunit 1 (122 aa).

Position 2 is an N-acetylalanine (alanine 2).

Belongs to the prefoldin subunit beta family. In terms of assembly, heterohexamer of two PFD-alpha type and four PFD-beta type subunits.

Functionally, binds specifically to cytosolic chaperonin (c-CPN) and transfers target proteins to it. Binds to nascent polypeptide chain and promotes folding in an environment in which there are many competing pathways for nonnative proteins. In Pongo abelii (Sumatran orangutan), this protein is Prefoldin subunit 1 (PFDN1).